We begin with the raw amino-acid sequence, 360 residues long: Probable CCR4-associated factor 1 homolog 1 (360 aa).

A divalent metal cation-binding residues include Asp37, Glu39, Asp155, and Asp226.

This sequence belongs to the CAF1 family. In terms of assembly, component of the CCR4-NOT complex, at least composed of CRR4 and CAF1 proteins. The cofactor is a divalent metal cation.

The protein resides in the nucleus. It localises to the cytoplasm. It catalyses the reaction Exonucleolytic cleavage of poly(A) to 5'-AMP.. Ubiquitous transcription factor required for a diverse set of processes. It is a component of the CCR4 complex involved in the control of gene expression. This is Probable CCR4-associated factor 1 homolog 1 (CAF1-1) from Arabidopsis thaliana (Mouse-ear cress).